The chain runs to 350 residues: Ferredoxin--NADP reductase (350 aa).

The FAD site is built by Thr14, Asp33, Gln41, Tyr46, Ala86, Phe121, Asp286, and Thr327.

This sequence belongs to the ferredoxin--NADP reductase type 2 family. Homodimer. Requires FAD as cofactor.

The catalysed reaction is 2 reduced [2Fe-2S]-[ferredoxin] + NADP(+) + H(+) = 2 oxidized [2Fe-2S]-[ferredoxin] + NADPH. The sequence is that of Ferredoxin--NADP reductase from Flavobacterium johnsoniae (strain ATCC 17061 / DSM 2064 / JCM 8514 / BCRC 14874 / CCUG 350202 / NBRC 14942 / NCIMB 11054 / UW101) (Cytophaga johnsonae).